We begin with the raw amino-acid sequence, 453 residues long: Pup--protein ligase (453 aa).

Mg(2+) is bound at residue Glu9. Arg53 is a binding site for ATP. Tyr55 contacts Mg(2+). Residue Asp57 is the Proton acceptor of the active site. Glu63 lines the Mg(2+) pocket. Residues Thr66 and Trp420 each contribute to the ATP site.

The protein belongs to the Pup ligase/Pup deamidase family. Pup-conjugating enzyme subfamily.

The catalysed reaction is ATP + [prokaryotic ubiquitin-like protein]-L-glutamate + [protein]-L-lysine = ADP + phosphate + N(6)-([prokaryotic ubiquitin-like protein]-gamma-L-glutamyl)-[protein]-L-lysine.. It participates in protein degradation; proteasomal Pup-dependent pathway. Its pathway is protein modification; protein pupylation. Functionally, catalyzes the covalent attachment of the prokaryotic ubiquitin-like protein modifier Pup to the proteasomal substrate proteins, thereby targeting them for proteasomal degradation. This tagging system is termed pupylation. The ligation reaction involves the side-chain carboxylate of the C-terminal glutamate of Pup and the side-chain amino group of a substrate lysine. In Streptomyces coelicolor (strain ATCC BAA-471 / A3(2) / M145), this protein is Pup--protein ligase.